The sequence spans 188 residues: Elongation factor P (188 aa).

The protein belongs to the elongation factor P family.

It is found in the cytoplasm. It participates in protein biosynthesis; polypeptide chain elongation. Its function is as follows. Involved in peptide bond synthesis. Stimulates efficient translation and peptide-bond synthesis on native or reconstituted 70S ribosomes in vitro. Probably functions indirectly by altering the affinity of the ribosome for aminoacyl-tRNA, thus increasing their reactivity as acceptors for peptidyl transferase. This Stutzerimonas stutzeri (strain A1501) (Pseudomonas stutzeri) protein is Elongation factor P.